The sequence spans 464 residues: Soluble pyridine nucleotide transhydrogenase (464 aa).

FAD is bound at residue 35 to 44 (DDRRQVGGNC).

Belongs to the class-I pyridine nucleotide-disulfide oxidoreductase family. The cofactor is FAD.

It localises to the cytoplasm. The catalysed reaction is NAD(+) + NADPH = NADH + NADP(+). In terms of biological role, conversion of NADPH, generated by peripheral catabolic pathways, to NADH, which can enter the respiratory chain for energy generation. The sequence is that of Soluble pyridine nucleotide transhydrogenase from Pseudomonas putida (strain GB-1).